Reading from the N-terminus, the 1138-residue chain is Condensin-2 complex subunit G2 (1138 aa).

S30 bears the Phosphoserine mark. One copy of the HEAT repeat lies at 459–497 (LLPTLRYSLHDNSEKVRVAFVDLLLKIKAVRAAKFWKIC). T1114 carries the phosphothreonine modification.

In terms of assembly, component of the condensin-2 complex, which contains the SMC2 and SMC4 heterodimer, and 3 non SMC subunits that probably regulate the complex: NCAPH2, NCAPD3 and NCAPG2. As to expression, expressed in spleen, lung and testis as well as in hematopoietic cell lines.

It localises to the nucleus. Regulatory subunit of the condensin-2 complex, a complex which establishes mitotic chromosome architecture and is involved in physical rigidity of the chromatid axis. Is required for early embryonic development and is essential for viability and expansion of the inner cell mass (ICM) of the implanting blastocyst. The polypeptide is Condensin-2 complex subunit G2 (Ncapg2) (Mus musculus (Mouse)).